We begin with the raw amino-acid sequence, 381 residues long: Probable serine/threonine-protein kinase PBL21 (381 aa).

A lipid anchor (S-palmitoyl cysteine) is attached at C3. The Protein kinase domain occupies 78 to 354 (FREVNLLGEG…GDIVVALEYL (277 aa)). ATP-binding positions include 84-92 (LGEGGFGRV) and K106. D204 serves as the catalytic Proton acceptor. The interval 362–381 (EARNVSSPSPEISRTPRRDL) is disordered.

The protein belongs to the protein kinase superfamily. Ser/Thr protein kinase family. Post-translationally, palmitoylation at Cys-3 and Cys-7 are required for plasma membrane location.

Its subcellular location is the cell membrane. It carries out the reaction L-seryl-[protein] + ATP = O-phospho-L-seryl-[protein] + ADP + H(+). The enzyme catalyses L-threonyl-[protein] + ATP = O-phospho-L-threonyl-[protein] + ADP + H(+). Functionally, may be involved in plant defense signaling. This Arabidopsis thaliana (Mouse-ear cress) protein is Probable serine/threonine-protein kinase PBL21.